A 101-amino-acid chain; its full sequence is Gastrin (101 aa).

The first 21 residues, 1–21, serve as a signal peptide directing secretion; sequence MQRLCVYVLIFALALAAFSEA. Residues 22 to 82 are disordered; it reads SWKPRSQQPD…SKKQGPWLEE (61 aa). At Gln59 the chain carries Pyrrolidone carboxylic acid; in form big gastrin. Gln76 is subject to Pyrrolidone carboxylic acid; in form gastrin. Position 87 is a sulfotyrosine; partial (Tyr87). Phe92 is subject to Phenylalanine amide. A Phosphoserine modification is found at Ser96. A propeptide spans 96–101 (removed in mature form); it reads SAEDEN.

It belongs to the gastrin/cholecystokinin family. Post-translationally, two different processing pathways probably exist in antral G-cells. In the dominant pathway progastrin is cleaved at three sites resulting in two major bioactive gastrins, gastrin-34 and gastrin-17. In the putative alternative pathway, progastrin may be processed only at the most C-terminal dibasic site resulting in the synthesis of gastrin-71. Sulfation enhances proteolytic processing, and blocks peptide degradation. Levels of sulfation differ between proteolytically-cleaved gastrins. Thus, gastrin-6 is almost 73% sulfated, whereas the larger gastrins are less than 50% sulfated. Sulfation levels are also tissue-specific.

It localises to the secreted. Functionally, gastrin stimulates the stomach mucosa to produce and secrete hydrochloric acid and the pancreas to secrete its digestive enzymes. It also stimulates smooth muscle contraction and increases blood circulation and water secretion in the stomach and intestine. In Homo sapiens (Human), this protein is Gastrin (GAST).